The sequence spans 350 residues: Chorismate synthase (350 aa).

2 residues coordinate NADP(+): Arg-39 and Arg-45. FMN is bound by residues 119–121, 213–214, Gly-258, 273–277, and Arg-299; these read RSS, QA, and KPIPT.

This sequence belongs to the chorismate synthase family. Homotetramer. It depends on FMNH2 as a cofactor.

It carries out the reaction 5-O-(1-carboxyvinyl)-3-phosphoshikimate = chorismate + phosphate. The protein operates within metabolic intermediate biosynthesis; chorismate biosynthesis; chorismate from D-erythrose 4-phosphate and phosphoenolpyruvate: step 7/7. Functionally, catalyzes the anti-1,4-elimination of the C-3 phosphate and the C-6 proR hydrogen from 5-enolpyruvylshikimate-3-phosphate (EPSP) to yield chorismate, which is the branch point compound that serves as the starting substrate for the three terminal pathways of aromatic amino acid biosynthesis. This reaction introduces a second double bond into the aromatic ring system. The sequence is that of Chorismate synthase from Thermoanaerobacter pseudethanolicus (strain ATCC 33223 / 39E) (Clostridium thermohydrosulfuricum).